The chain runs to 477 residues: MTIFEKSTSGRKGYELPEYELPSVDCGIPEHLVRKEKPLLPEVSEVDVVRHYTELASKNYSVDKGFYPLGSCTMKYNPKINEDMAMLFTQLHPMQPRETIQGAIDLMGHLKEMLCEITGTDDMTLQPAAGAHGELTGLLVARAYFEDKGELDKRRKVLVPDSAHGTNPASAAMAGFEVVELKSGKDGCVNLEELKAHLDENVAVIMLTNPNTLGLFEKDILTIAKMAHEVGALLYYDGANLNAIMGRTRPGDMGFDIVHLNLHKTFSTPHGMGGPGSGPIGVKKHLAPYLPVPVIRKAGEKYDLDYNLPKSIGMVRSFYGNFTVMVKAYTYILTMGNKGLKHVSDMAVLNANYLRAKLSKIYKVAYDRICMHEFVIDNEEFVKKTGVKTLDIAKRLLDYGLHAPTVYFPLIVHEAMMIEPTETESKRTLDEFIDAMEKIYNEAIENPELVKKAPYKTPIRRLDDVNATKYPVFRYKK.

Lysine 264 carries the N6-(pyridoxal phosphate)lysine modification.

It belongs to the GcvP family. C-terminal subunit subfamily. As to quaternary structure, the glycine cleavage system is composed of four proteins: P, T, L and H. In this organism, the P 'protein' is a heterodimer of two subunits. The cofactor is pyridoxal 5'-phosphate.

It catalyses the reaction N(6)-[(R)-lipoyl]-L-lysyl-[glycine-cleavage complex H protein] + glycine + H(+) = N(6)-[(R)-S(8)-aminomethyldihydrolipoyl]-L-lysyl-[glycine-cleavage complex H protein] + CO2. Functionally, the glycine cleavage system catalyzes the degradation of glycine. The P protein binds the alpha-amino group of glycine through its pyridoxal phosphate cofactor; CO(2) is released and the remaining methylamine moiety is then transferred to the lipoamide cofactor of the H protein. In Fervidobacterium nodosum (strain ATCC 35602 / DSM 5306 / Rt17-B1), this protein is Probable glycine dehydrogenase (decarboxylating) subunit 2.